A 168-amino-acid chain; its full sequence is Gastrula zinc finger protein XlCGF42.1 (168 aa).

C2H2-type zinc fingers lie at residues Tyr6–His28, Phe34–His56, Cys62–His84, Phe90–His112, Tyr118–His140, and Phe146–His165.

It belongs to the krueppel C2H2-type zinc-finger protein family.

It localises to the nucleus. Its function is as follows. May be involved in transcriptional regulation. This Xenopus laevis (African clawed frog) protein is Gastrula zinc finger protein XlCGF42.1.